Consider the following 458-residue polypeptide: Argininosuccinate lyase (458 aa).

It belongs to the lyase 1 family. Argininosuccinate lyase subfamily.

It is found in the cytoplasm. It catalyses the reaction 2-(N(omega)-L-arginino)succinate = fumarate + L-arginine. It functions in the pathway amino-acid biosynthesis; L-arginine biosynthesis; L-arginine from L-ornithine and carbamoyl phosphate: step 3/3. This Actinobacillus pleuropneumoniae serotype 7 (strain AP76) protein is Argininosuccinate lyase.